A 237-amino-acid chain; its full sequence is Small ribosomal subunit protein eS4 (237 aa).

The S4 RNA-binding domain occupies 38–110; sequence LPLAVVVRDV…EAKYYDLKPI (73 aa).

The protein belongs to the eukaryotic ribosomal protein eS4 family.

The protein is Small ribosomal subunit protein eS4 of Pyrobaculum calidifontis (strain DSM 21063 / JCM 11548 / VA1).